The chain runs to 194 residues: Threonylcarbamoyl-AMP synthase (194 aa).

Residues 12–194 (SPNMKDLLIQ…DVMTGKLIRE (183 aa)) enclose the YrdC-like domain.

It belongs to the SUA5 family. TsaC subfamily.

Its subcellular location is the cytoplasm. The enzyme catalyses L-threonine + hydrogencarbonate + ATP = L-threonylcarbamoyladenylate + diphosphate + H2O. Its function is as follows. Required for the formation of a threonylcarbamoyl group on adenosine at position 37 (t(6)A37) in tRNAs that read codons beginning with adenine. Catalyzes the conversion of L-threonine, HCO(3)(-)/CO(2) and ATP to give threonylcarbamoyl-AMP (TC-AMP) as the acyladenylate intermediate, with the release of diphosphate. The polypeptide is Threonylcarbamoyl-AMP synthase (Blochmanniella pennsylvanica (strain BPEN)).